The chain runs to 1521 residues: Probable DNA topoisomerase 2 (1521 aa).

The segment covering 1 to 10 has biased composition (acidic residues); that stretch reads MSDSENDYSD. The segment at 1–87 is disordered; sequence MSDSENDYSD…DDKSSSSDNE (87 aa). Over residues 36–48 the composition is skewed to basic residues; that stretch reads SKKKASATRKPAA. Residues 49–62 are compositionally biased toward low complexity; the sequence is KKATTTTTSTTKKS. Residues Asn-163, Asn-192, 220–222, and 233–240 each bind ATP; these read SSH and GRNGFGAK. The interval 412 to 414 is interaction with DNA; the sequence is NKK. Position 446–448 (446–448) interacts with ATP; sequence QTK. One can recognise a Toprim domain in the interval 527–640; the sequence is CTLILTEGDS…TLLRMPGFLV (114 aa). Residues Glu-533, Asp-609, and Asp-611 each coordinate Mg(2+). A Topo IIA-type catalytic domain is found at 771 to 1273; the sequence is IPNIVDGLKT…PIQEIYKRDL (503 aa). Residue Tyr-861 is the O-(5'-phospho-DNA)-tyrosine intermediate of the active site. The tract at residues 1007-1047 is disordered; the sequence is GTRKKKKEEKEKKAASRKGTKAKPTTTKRSKRVDDDDDNEK. Residues 1021 to 1037 are compositionally biased toward basic residues; sequence ASRKGTKAKPTTTKRSK. The segment at 1085–1094 is interaction with DNA; the sequence is KLVSTINETN. Disordered regions lie at residues 1192–1222 and 1335–1521; these read KIKK…EQDD and IPTT…SDSD. The segment covering 1201 to 1222 has biased composition (acidic residues); the sequence is DEEDAAISSDEEKDGAQEEQDD. Over residues 1354–1368 the composition is skewed to low complexity; that stretch reads TTSTSTSTTTSSNTK. The segment covering 1422-1438 has biased composition (acidic residues); the sequence is LSDESDQESDQESDQGS. The span at 1454–1467 shows a compositional bias: low complexity; sequence PTTIATKKATTSKS. Residues 1468-1480 show a composition bias toward basic and acidic residues; sequence KVIDDKSSDDEVI. Acidic residues predominate over residues 1503–1521; that stretch reads SDSDDDDLYDNEESSSDSD.

It belongs to the type II topoisomerase family. Homodimer. Mg(2+) is required as a cofactor. The cofactor is Mn(2+). It depends on Ca(2+) as a cofactor.

The protein localises to the nucleus. The catalysed reaction is ATP-dependent breakage, passage and rejoining of double-stranded DNA.. Functionally, control of topological states of DNA by transient breakage and subsequent rejoining of DNA strands. Topoisomerase II makes double-strand breaks. The sequence is that of Probable DNA topoisomerase 2 (top2) from Dictyostelium discoideum (Social amoeba).